A 278-amino-acid polypeptide reads, in one-letter code: MGTLGRAIYTVGNWIRGTGQALDRVGSLLQGSHRIEEHLSRHRTLMNVFDKSPLVDKDVFVAPSASVIGDVQIGKGSSIWYGCVLRGDVNNISVGSGTNIQDNTLVHVAKTNISGKVLPTLIGDNVTVGHSAVIHGCTVEDDAFVGMGATLLDGVVVEKHAMVAAGSLVKQNTRIPSGEVWGGNPAKFMRKLTDEEIVYISQSAKNYINLAQIHASENSKSFEQIEVERALRKKYARKDEDYDSMLGITRETPPELILPDNVLPGGKPVAKVPSTQYF.

The transit peptide at 1–43 directs the protein to the mitochondrion; that stretch reads MGTLGRAIYTVGNWIRGTGQALDRVGSLLQGSHRIEEHLSRHR. Residues 86 to 88 and 101 to 102 contribute to the substrate site; these read RGD and QD. The Zn(2+) site is built by His107, His130, and His135. Asn209 is a binding site for substrate.

It belongs to the gamma-class carbonic anhydrase family. Homotrimer. Component of the mitochondrial oxidoreductase respiratory chain complex I; element of the extra matrix-exposed domain, which is attached to the membrane arm of this complex. Interacts with GAMMACAL1 and GAMMACAL2. Zn(2+) is required as a cofactor. Constitutively expressed in roots and leaves, with higher levels in flowers, particularly in tapetal tissue of anthers, inflorescence (IM) and floral meristems (FM).

The protein localises to the mitochondrion membrane. Its function is as follows. Enzyme involved in the catabolism of H(2)CO(3) but that does not mediates the reversible hydration of carbon dioxide. Mediates complex I assembly in mitochondria and respiration. Binds HCO(3)-. Required for male fertility during anther development and dehiscence to regulate the secondary thickenings of the endothecial cell wall, probably by modulating H(2)O(2)-dependent lignin polymerization. In Arabidopsis thaliana (Mouse-ear cress), this protein is Gamma carbonic anhydrase 2, mitochondrial (GAMMACA2).